The primary structure comprises 367 residues: Alcohol dehydrogenase 2 (367 aa).

Residues C48, H74, C107, C110, C113, C121, and C163 each contribute to the Zn(2+) site. Residues 187–193 (GAGGGLG), D212, K216, 286–288 (VGI), and R361 each bind NAD(+).

It belongs to the zinc-containing alcohol dehydrogenase family. In terms of assembly, homotetramer. Zn(2+) serves as cofactor.

The protein resides in the cytoplasm. The enzyme catalyses a primary alcohol + NAD(+) = an aldehyde + NADH + H(+). It catalyses the reaction a secondary alcohol + NAD(+) = a ketone + NADH + H(+). In Emericella nidulans (strain FGSC A4 / ATCC 38163 / CBS 112.46 / NRRL 194 / M139) (Aspergillus nidulans), this protein is Alcohol dehydrogenase 2 (alcB).